Here is a 151-residue protein sequence, read N- to C-terminus: Large ribosomal subunit protein bL9 (151 aa).

It belongs to the bacterial ribosomal protein bL9 family.

Its function is as follows. Binds to the 23S rRNA. This is Large ribosomal subunit protein bL9 from Nitrosomonas europaea (strain ATCC 19718 / CIP 103999 / KCTC 2705 / NBRC 14298).